The primary structure comprises 339 residues: Probable protein phosphatase 2C 28 (339 aa).

Positions 87 to 334 (DHGYHLVKGQ…DDISCVVVSF (248 aa)) constitute a PPM-type phosphatase domain. Mn(2+) is bound by residues aspartate 124, glycine 125, aspartate 286, and aspartate 325.

It belongs to the PP2C family. It depends on Mg(2+) as a cofactor. Requires Mn(2+) as cofactor.

The catalysed reaction is O-phospho-L-seryl-[protein] + H2O = L-seryl-[protein] + phosphate. It carries out the reaction O-phospho-L-threonyl-[protein] + H2O = L-threonyl-[protein] + phosphate. The polypeptide is Probable protein phosphatase 2C 28 (Arabidopsis thaliana (Mouse-ear cress)).